A 338-amino-acid chain; its full sequence is Citramalyl-CoA lyase, mitochondrial (338 aa).

The transit peptide at 1 to 20 (MALCVLRNTVRGAAALPRLK) directs the protein to the mitochondrion. Substrate contacts are provided by Tyr48, Lys55, and Lys59. N6-acetyllysine is present on residues Lys55, Lys59, and Lys64. An N6-acetyllysine; alternate mark is found at Lys80 and Lys90. An N6-succinyllysine; alternate mark is found at Lys80 and Lys90. Arg105 contacts substrate. Residues Glu169 and Asp204 each contribute to the Mg(2+) site. Substrate is bound at residue 270 to 271 (IH). Lys307 is subject to N6-succinyllysine. Asp318 is a catalytic residue.

It belongs to the HpcH/HpaI aldolase family. Citrate lyase beta subunit-like subfamily. As to quaternary structure, homotrimer. Requires Mg(2+) as cofactor. As to expression, detected in brown fat, brain, liver, kidney, heart, skeletal muscle and ovary (at protein level).

It localises to the mitochondrion. It catalyses the reaction glyoxylate + acetyl-CoA + H2O = (S)-malate + CoA + H(+). The enzyme catalyses propanoyl-CoA + glyoxylate + H2O = 3-methylmalate + CoA + H(+). It carries out the reaction (3S)-citramalyl-CoA = pyruvate + acetyl-CoA. The catalysed reaction is (S)-malyl-CoA + H2O = (S)-malate + CoA + H(+). In terms of biological role, mitochondrial citramalyl-CoA lyase indirectly involved in the vitamin B12 metabolism. Converts citramalyl-CoA into acetyl-CoA and pyruvate in the C5-dicarboxylate catabolism pathway. The C5-dicarboxylate catabolism pathway is required to detoxify itaconate, a vitamin B12-poisoning metabolite. Also acts as a malate synthase in vitro, converting glyoxylate and acetyl-CoA to malate. Also displays malyl-CoA thioesterase activity. Also acts as a beta-methylmalate synthase in vitro, by mediating conversion of glyoxylate and propionyl-CoA to beta-methylmalate. Also has very weak citramalate synthase activity in vitro. The sequence is that of Citramalyl-CoA lyase, mitochondrial from Mus musculus (Mouse).